A 72-amino-acid chain; its full sequence is Conotoxin im23a (72 aa).

A signal peptide spans 1-22 (MIMRMTLTLFVLVVMTAASASG). The propeptide occupies 23–28 (DALTEA). 3 disulfide bridges follow: cysteine 34–cysteine 41, cysteine 45–cysteine 55, and cysteine 56–cysteine 71.

It belongs to the conotoxin K superfamily. Expressed by the venom duct.

The protein resides in the secreted. Functionally, neurotoxin that induces excitatory symptoms in mice following intracranial administration. No symptoms are observed after intraperitoneal and intravenous (tail vein) injections. The sequence is that of Conotoxin im23a from Conus imperialis (Imperial cone).